The chain runs to 103 residues: Heme-copper oxidase subunit 4 (103 aa).

3 helical membrane-spanning segments follow: residues 20–40 (VWIVLVASAVAEVYLVLEGIA), 42–62 (NPFVFVLAVALFQSSLIALFF), and 75–95 (ITVSGAVLIAILIISAVTSVL).

It is found in the cell membrane. The chain is Heme-copper oxidase subunit 4 (aoxC) from Aeropyrum pernix (strain ATCC 700893 / DSM 11879 / JCM 9820 / NBRC 100138 / K1).